The primary structure comprises 251 residues: Ubiquitin-conjugating enzyme E2 6 (251 aa).

At 1-229 (MASIQANKRL…DQDKNPGENS (229 aa)) the chain is on the cytoplasmic side. Residues 5 to 154 (QANKRLTKEY…YSNFKFKNMF (150 aa)) enclose the UBC core domain. The active-site Glycyl thioester intermediate is Cys-87. Basic and acidic residues predominate over residues 173 to 185 (AESKGAQQEENKA). Residues 173–200 (AESKGAQQEENKAQKLATEKATSLDDIS) form a disordered region. Residues 230-250 (NIKSLLCLILAIAIFFVGLIM) form a helical membrane-spanning segment.

The protein belongs to the ubiquitin-conjugating enzyme family.

The protein localises to the endoplasmic reticulum membrane. The catalysed reaction is S-ubiquitinyl-[E1 ubiquitin-activating enzyme]-L-cysteine + [E2 ubiquitin-conjugating enzyme]-L-cysteine = [E1 ubiquitin-activating enzyme]-L-cysteine + S-ubiquitinyl-[E2 ubiquitin-conjugating enzyme]-L-cysteine.. The protein operates within protein modification; protein ubiquitination. Catalyzes the covalent attachment of ubiquitin to other proteins. Functions in degradation of misfolded or regulated proteins localized in the endoplasmic reticulum (ER) lumen or membrane via the ubiquitin-proteasome system. Cognate E2 conjugating enzyme for the DOA10 ubiquitin ligase complex, which is part of the ERAD-C pathway responsible for the rapid degradation of membrane proteins with misfolded cytoplasmic domains. This Kluyveromyces lactis (strain ATCC 8585 / CBS 2359 / DSM 70799 / NBRC 1267 / NRRL Y-1140 / WM37) (Yeast) protein is Ubiquitin-conjugating enzyme E2 6 (UBC6).